Here is a 151-residue protein sequence, read N- to C-terminus: Nucleoside diphosphate kinase (151 aa).

Residues Lys9, Phe57, Arg85, Thr91, Arg102, and Asn112 each contribute to the ATP site. His115 serves as the catalytic Pros-phosphohistidine intermediate.

Belongs to the NDK family. It depends on Mg(2+) as a cofactor.

Its subcellular location is the cytoplasm. It catalyses the reaction a 2'-deoxyribonucleoside 5'-diphosphate + ATP = a 2'-deoxyribonucleoside 5'-triphosphate + ADP. The catalysed reaction is a ribonucleoside 5'-diphosphate + ATP = a ribonucleoside 5'-triphosphate + ADP. Functionally, major role in the synthesis of nucleoside triphosphates other than ATP. The ATP gamma phosphate is transferred to the NDP beta phosphate via a ping-pong mechanism, using a phosphorylated active-site intermediate. The chain is Nucleoside diphosphate kinase from Archaeoglobus fulgidus (strain ATCC 49558 / DSM 4304 / JCM 9628 / NBRC 100126 / VC-16).